The chain runs to 187 residues: 1,6-anhydro-N-acetylmuramyl-L-alanine amidase AmpD (187 aa).

One can recognise an N-acetylmuramoyl-L-alanine amidase domain in the interval 29 to 167 (TLLVVHNISL…APERKTDPGP (139 aa)). His34 is a Zn(2+) binding site. The Proton acceptor role is filled by Glu116. His154 and Asp164 together coordinate Zn(2+).

Belongs to the N-acetylmuramoyl-L-alanine amidase 2 family. Zn(2+) is required as a cofactor.

Its subcellular location is the cytoplasm. The catalysed reaction is Hydrolyzes the link between N-acetylmuramoyl residues and L-amino acid residues in certain cell-wall glycopeptides.. Functionally, involved in cell wall peptidoglycan recycling. Specifically cleaves the amide bond between the lactyl group of N-acetylmuramic acid and the alpha-amino group of the L-alanine in degradation products containing an anhydro N-acetylmuramyl moiety. This Enterobacter cloacae protein is 1,6-anhydro-N-acetylmuramyl-L-alanine amidase AmpD.